A 107-amino-acid chain; its full sequence is uncharacterized protein (107 aa).

The helical transmembrane segment at 13–33 (VLIVTFLSSFIFIVWLPVALV) threads the bilayer.

It localises to the membrane. This is an uncharacterized protein from Saccharomyces cerevisiae (strain ATCC 204508 / S288c) (Baker's yeast).